We begin with the raw amino-acid sequence, 505 residues long: Outer capsid protein VP5 (505 aa).

The segment at 1-42 (MGKFTSFLKRAGSATKKALTSDAAKRMYKMAGKTLQKVVESE) is involved in membrane permeabilization.

Belongs to the orbivirus VP5 family.

Its subcellular location is the virion. VP5 protein is one of the two proteins (with VP2) which constitute the virus particle outer capsid. Acts as a membrane permeabilization protein that mediates release of viral particles from endosomal compartments into the cytoplasm. Permeabilization activity is probably negatively regulated by VP2 and is triggered by endosomal degradation of VP2 and exposure to low pH. The sequence is that of Outer capsid protein VP5 (Segment-6) from African horse sickness virus 9 (AHSV-9).